The primary structure comprises 260 residues: MTILAEIVKYKQSLLQNGYYQDKLNTLKSVKIQNKKSFINAIEKERKLAIIAEIKSKSPTVNDLPERDLSQQISDYEKYGANAVSILTDEKYFGGSFERLQALTTKTTLPVLCKDFIIDPLQIDVAKQAGASMILLIVNILSDKQLKDLYNYAISQNLEVLVEVHDRHELERVYKVNAKLIGVNNRDLKRFVTNVEHTNTILENKKPNHYYISESGIHDASDVRKILHSGIDGLLIGEALMRCDNLSEFLPQLKMQKVKS.

This sequence belongs to the TrpC family.

It carries out the reaction 1-(2-carboxyphenylamino)-1-deoxy-D-ribulose 5-phosphate + H(+) = (1S,2R)-1-C-(indol-3-yl)glycerol 3-phosphate + CO2 + H2O. The protein operates within amino-acid biosynthesis; L-tryptophan biosynthesis; L-tryptophan from chorismate: step 4/5. In Staphylococcus aureus (strain bovine RF122 / ET3-1), this protein is Indole-3-glycerol phosphate synthase.